A 443-amino-acid chain; its full sequence is Chromosomal replication initiator protein DnaA (443 aa).

The domain I, interacts with DnaA modulators stretch occupies residues M1–F67. Residues F67–G105 form a domain II region. The interval N106–A323 is domain III, AAA+ region. The ATP site is built by G151, G153, K154, and T155. A domain IV, binds dsDNA region spans residues N324–E443.

Belongs to the DnaA family. In terms of assembly, oligomerizes as a right-handed, spiral filament on DNA at oriC.

The protein localises to the cytoplasm. In terms of biological role, plays an essential role in the initiation and regulation of chromosomal replication. ATP-DnaA binds to the origin of replication (oriC) to initiate formation of the DNA replication initiation complex once per cell cycle. Binds the DnaA box (a 9 base pair repeat at the origin) and separates the double-stranded (ds)DNA. Forms a right-handed helical filament on oriC DNA; dsDNA binds to the exterior of the filament while single-stranded (ss)DNA is stabiized in the filament's interior. The ATP-DnaA-oriC complex binds and stabilizes one strand of the AT-rich DNA unwinding element (DUE), permitting loading of DNA polymerase. After initiation quickly degrades to an ADP-DnaA complex that is not apt for DNA replication. Binds acidic phospholipids. The sequence is that of Chromosomal replication initiator protein DnaA from Stenotrophomonas maltophilia (strain K279a).